The chain runs to 66 residues: DNA-directed RNA polymerase subunit Rpo10 (66 aa).

The Zn(2+) site is built by Cys-7, Cys-10, Cys-44, and Cys-45.

It belongs to the archaeal Rpo10/eukaryotic RPB10 RNA polymerase subunit family. Part of the RNA polymerase complex. The cofactor is Zn(2+).

The protein resides in the cytoplasm. It catalyses the reaction RNA(n) + a ribonucleoside 5'-triphosphate = RNA(n+1) + diphosphate. Functionally, DNA-dependent RNA polymerase (RNAP) catalyzes the transcription of DNA into RNA using the four ribonucleoside triphosphates as substrates. This Pyrobaculum neutrophilum (strain DSM 2338 / JCM 9278 / NBRC 100436 / V24Sta) (Thermoproteus neutrophilus) protein is DNA-directed RNA polymerase subunit Rpo10.